The chain runs to 211 residues: Dibenzothiophene metabolism operon protein DoxH (211 aa).

It participates in aromatic compound metabolism; naphthalene degradation. Its function is as follows. May be involved in the conversion of 2-hydroxy-4-(2'-oxo-3,5-cyclohexadienyl)-buta-2,4-dienoate to cis-O-hydroxybenzylidenepyruvate. DoxH and doxJ encode different enzymes that may have interchangeable functions. This chain is Dibenzothiophene metabolism operon protein DoxH (doxH), found in Pseudomonas sp. (strain C18).